A 323-amino-acid chain; its full sequence is MGNSAARSDFEWVYSDQPHTQRRKEMLAKYPSIKALMRPDPNIKWTVLGMVLVQVLACWLVRGLSWRWLLFWAYAFGGCINHSLTLAIHDISHNTAFGTRCASRNRWFAVFANLPIGLPYATSFKKYHVDHHRYLGGDGLDVDIPTDFEGWFFCTPARKLLWLVLQPFFYSLRPLYVNPKAVTRMEILNALVQLAFNVTIFALWGIKAIVYLLASSLLGLGLHPISGHFVAEHYMFLKGHETYSYYGPLNWITFNVGYHVEHHDFPSIPGCYLPLVRMIAPEYYDHLPQHHSWVKVLWDFVFEDSLGPYSRVKRKCKLAKDQL.

The N-myristoyl glycine moiety is linked to residue Gly2. 2 helical membrane passes run Pro41–Val61 and Trp68–Ile88. The short motif at His89–His93 is the Histidine box-1 element. The tract at residues Thr95–Thr99 is required for C4-hydroxylase activity. Positions His128 to His132 match the Histidine box-2 motif. Residues Ile200–Leu220 form a helical membrane-spanning segment. Positions His259–His263 match the Histidine box-3 motif.

It belongs to the fatty acid desaturase type 1 family. DEGS subfamily.

Its subcellular location is the endoplasmic reticulum membrane. The enzyme catalyses a dihydroceramide + 2 Fe(II)-[cytochrome b5] + O2 + 2 H(+) = a phytoceramide + 2 Fe(III)-[cytochrome b5] + H2O. The catalysed reaction is an N-acylsphinganine + 2 Fe(II)-[cytochrome b5] + O2 + 2 H(+) = an N-acylsphing-4-enine + 2 Fe(III)-[cytochrome b5] + 2 H2O. It catalyses the reaction N-octanoylsphinganine + 2 Fe(II)-[cytochrome b5] + O2 + 2 H(+) = N-octanoyl-4-hydroxysphinganine + 2 Fe(III)-[cytochrome b5] + H2O. It carries out the reaction an N-acylsphinganine + 2 Fe(II)-[cytochrome b5] + O2 + 2 H(+) = an N-acyl-(4R)-4-hydroxysphinganine + 2 Fe(III)-[cytochrome b5] + H2O. It functions in the pathway membrane lipid metabolism; sphingolipid biosynthesis. Its function is as follows. Bifunctional enzyme which acts both as a sphingolipid delta(4)-desaturase and a sphingolipid C4-monooxygenase. The protein is Sphingolipid delta(4)-desaturase/C4-monooxygenase DES2 of Rattus norvegicus (Rat).